A 55-amino-acid chain; its full sequence is Large ribosomal subunit protein bL33 (55 aa).

The protein belongs to the bacterial ribosomal protein bL33 family.

This chain is Large ribosomal subunit protein bL33, found in Erythrobacter litoralis (strain HTCC2594).